Consider the following 296-residue polypeptide: Pantothenate synthetase (296 aa).

30 to 37 contributes to the ATP binding site; that stretch reads MGNLHEGH. The active-site Proton donor is histidine 37. (R)-pantoate is bound at residue glutamine 61. A beta-alanine-binding site is contributed by glutamine 61. Residue 149–152 participates in ATP binding; the sequence is GEKD. Residue glutamine 155 coordinates (R)-pantoate. Residues valine 178 and 186-189 contribute to the ATP site; that span reads MSSR.

Belongs to the pantothenate synthetase family. As to quaternary structure, homodimer.

It localises to the cytoplasm. The catalysed reaction is (R)-pantoate + beta-alanine + ATP = (R)-pantothenate + AMP + diphosphate + H(+). Its pathway is cofactor biosynthesis; (R)-pantothenate biosynthesis; (R)-pantothenate from (R)-pantoate and beta-alanine: step 1/1. Catalyzes the condensation of pantoate with beta-alanine in an ATP-dependent reaction via a pantoyl-adenylate intermediate. The sequence is that of Pantothenate synthetase from Vibrio atlanticus (strain LGP32) (Vibrio splendidus (strain Mel32)).